Here is a 275-residue protein sequence, read N- to C-terminus: NH(3)-dependent NAD(+) synthetase (275 aa).

ATP is bound at residue 46 to 53; sequence GISGGQDS. Mg(2+) is bound at residue aspartate 52. Deamido-NAD(+) is bound at residue arginine 140. Threonine 160 contacts ATP. Glutamate 165 is a binding site for Mg(2+). Residues lysine 173 and aspartate 180 each contribute to the deamido-NAD(+) site. Residues lysine 189 and threonine 211 each coordinate ATP. 260-261 contacts deamido-NAD(+); it reads HK.

The protein belongs to the NAD synthetase family. Homodimer.

The catalysed reaction is deamido-NAD(+) + NH4(+) + ATP = AMP + diphosphate + NAD(+) + H(+). Its pathway is cofactor biosynthesis; NAD(+) biosynthesis; NAD(+) from deamido-NAD(+) (ammonia route): step 1/1. In terms of biological role, catalyzes the ATP-dependent amidation of deamido-NAD to form NAD. Uses ammonia as a nitrogen source. This is NH(3)-dependent NAD(+) synthetase from Escherichia coli O157:H7.